A 558-amino-acid chain; its full sequence is Putative ABC transporter ATP-binding protein gbs1680 (558 aa).

2 consecutive ABC transporter domains span residues 5 to 246 (IEWK…GIRE) and 295 to 527 (LSVQ…THLK). Residues 39–46 (GPSGSGKS) and 328–335 (GKNGAGKS) each bind ATP.

The protein belongs to the ABC transporter superfamily.

The protein resides in the cell membrane. Probably part of an ABC transporter complex. Responsible for energy coupling to the transport system. The protein is Putative ABC transporter ATP-binding protein gbs1680 of Streptococcus agalactiae serotype III (strain NEM316).